A 31-amino-acid polypeptide reads, in one-letter code: uncharacterized protein (31 aa).

This is an uncharacterized protein from Caenorhabditis elegans.